The chain runs to 512 residues: Glucose-6-phosphate 1-dehydrogenase (512 aa).

NADP(+) is bound by residues Arg61, 103–104 (EF), and Lys171. His201, Lys205, Glu239, and Asp258 together coordinate substrate. His263 (proton acceptor) is an active-site residue. 2 residues coordinate substrate: Lys360 and Lys365. A disordered region spans residues 479–512 (QDSSPSFPNYPAGSSGPKEADALIERDGRSWRPL). Residues 496-512 (KEADALIERDGRSWRPL) are compositionally biased toward basic and acidic residues.

The protein belongs to the glucose-6-phosphate dehydrogenase family.

The catalysed reaction is D-glucose 6-phosphate + NADP(+) = 6-phospho-D-glucono-1,5-lactone + NADPH + H(+). It functions in the pathway carbohydrate degradation; pentose phosphate pathway; D-ribulose 5-phosphate from D-glucose 6-phosphate (oxidative stage): step 1/3. Functionally, catalyzes the oxidation of glucose 6-phosphate to 6-phosphogluconolactone. This chain is Glucose-6-phosphate 1-dehydrogenase, found in Chlamydia pneumoniae (Chlamydophila pneumoniae).